The following is a 40-amino-acid chain: Photosystem I reaction center subunit IX (40 aa).

The chain crosses the membrane as a helical span at residues 4–24 (FFESWPMAAVLWVWLTAGIIV).

It belongs to the PsaJ family.

The protein localises to the cellular thylakoid membrane. Functionally, may help in the organization of the PsaE and PsaF subunits. The protein is Photosystem I reaction center subunit IX of Prochlorococcus marinus (strain MIT 9313).